Consider the following 745-residue polypeptide: AP-3 complex subunit beta (745 aa).

S638 carries the phosphoserine modification. Residues 674-745 are disordered; that stretch reads YASETSESSE…TEPEPNYWQS (72 aa). Acidic residues predominate over residues 680 to 718; sequence ESSEGEYETSTSESEDEETDDTSQEEDNEKNSTPDEDTE.

The protein belongs to the adaptor complexes large subunit family. As to quaternary structure, adaptor protein complex 3 (AP-3) is a heterotetramer composed of 2 large adaptins (apl5 and apl6), a medium adaptin (apm3) and a small adaptin (aps3).

It localises to the golgi apparatus. It is found in the cytoplasmic vesicle. The protein localises to the clathrin-coated vesicle membrane. Functionally, adaptins are components of the adaptor complexes which link clathrin to receptors in coated vesicles. Clathrin-associated protein complexes are believed to interact with the cytoplasmic tails of membrane proteins, leading to their selection and concentration. Beta adaptin is a subunit of the plasma membrane adaptor. This chain is AP-3 complex subunit beta (apl6), found in Schizosaccharomyces pombe (strain 972 / ATCC 24843) (Fission yeast).